The primary structure comprises 89 residues: uncharacterized protein (89 aa).

This is an uncharacterized protein from Vaccinia virus (strain Copenhagen) (VACV).